The sequence spans 113 residues: Large ribosomal subunit protein uL24 (113 aa).

The protein belongs to the universal ribosomal protein uL24 family. Part of the 50S ribosomal subunit.

In terms of biological role, one of two assembly initiator proteins, it binds directly to the 5'-end of the 23S rRNA, where it nucleates assembly of the 50S subunit. Functionally, one of the proteins that surrounds the polypeptide exit tunnel on the outside of the subunit. In Fusobacterium nucleatum subsp. nucleatum (strain ATCC 25586 / DSM 15643 / BCRC 10681 / CIP 101130 / JCM 8532 / KCTC 2640 / LMG 13131 / VPI 4355), this protein is Large ribosomal subunit protein uL24 (rplX).